A 65-amino-acid chain; its full sequence is Small ribosomal subunit protein bS21 (65 aa).

It belongs to the bacterial ribosomal protein bS21 family.

The polypeptide is Small ribosomal subunit protein bS21 (Acidobacterium capsulatum (strain ATCC 51196 / DSM 11244 / BCRC 80197 / JCM 7670 / NBRC 15755 / NCIMB 13165 / 161)).